The sequence spans 69 residues: Small ribosomal subunit protein bS21 (69 aa).

The protein belongs to the bacterial ribosomal protein bS21 family.

In Borrelia duttonii (strain Ly), this protein is Small ribosomal subunit protein bS21.